Reading from the N-terminus, the 173-residue chain is Helix-loop-helix protein lin-22 (173 aa).

The segment at 21 to 34 is basic motif; that stretch reads KKIKNKPLMEKKRR. One can recognise a bHLH domain in the interval 21–78; it reads KKIKNKPLMEKKRRARINKSLSQLKQILIQDEHKNSIQHSKWEKADILEMAVEYLQQL. The segment at 35–78 is helix-loop-helix motif; it reads ARINKSLSQLKQILIQDEHKNSIQHSKWEKADILEMAVEYLQQL. The segment covering 83-95 has biased composition (low complexity); sequence PCSLSPSTSSIST. Residues 83–102 are disordered; that stretch reads PCSLSPSTSSISTPPTPKEE.

Expressed mostly in the seam (stem) cells and hypodermis (hyp7), but also to a lesser extent in the intestine.

The protein resides in the nucleus. Probable transcription factor. During development, required for cell fate specification, probably by promoting or repressing expression of genes involved in specific cell fate. Involved in specifying lineages derived from the epidermal stem cells of the lateral ectoderm, known as seam cells. Modulates symmetric divisions of seam cells, perhaps in concert with the Wnt signaling pathway. May repress expression of homeobox genes mab-5, egl-5 and lin-39. The sequence is that of Helix-loop-helix protein lin-22 from Caenorhabditis elegans.